The sequence spans 512 residues: ETS translocation variant 3 (512 aa).

The ETS DNA-binding region spans 35-116 (IQLWHFILEL…KGKRFTYKFN (82 aa)). Positions 136 to 222 (VPQSAPPVPT…NAIGGGGIGH (87 aa)) are disordered. 3 positions are modified to phosphoserine: S139, S159, and S315. The span at 158–184 (HSPTNDVQPGRFSASSLTASGQESSNG) shows a compositional bias: polar residues. The segment at 336–512 (PEESTQFSIK…QGLATAAADA (177 aa)) is disordered. Composition is skewed to basic and acidic residues over residues 380–406 (IKVE…HTQE), 453–468 (DRPG…KEDA), and 479–491 (RWND…ELSK). K381 participates in a covalent cross-link: Glycyl lysine isopeptide (Lys-Gly) (interchain with G-Cter in SUMO2). The residue at position 388 (K388) is an N6-acetyllysine; alternate. A Glycyl lysine isopeptide (Lys-Gly) (interchain with G-Cter in SUMO2); alternate cross-link involves residue K388.

It belongs to the ETS family.

The protein localises to the nucleus. Transcriptional repressor that contribute to growth arrest during terminal macrophage differentiation by repressing target genes involved in Ras-dependent proliferation. Represses MMP1 promoter activity. This Homo sapiens (Human) protein is ETS translocation variant 3 (ETV3).